A 436-amino-acid polypeptide reads, in one-letter code: 3-ketoacyl-CoA thiolase (436 aa).

Residue Cys-99 is the Acyl-thioester intermediate of the active site. Active-site proton acceptor residues include His-392 and Cys-422.

Belongs to the thiolase-like superfamily. Thiolase family. As to quaternary structure, heterotetramer of two alpha chains (FadJ) and two beta chains (FadI).

It is found in the cytoplasm. The enzyme catalyses an acyl-CoA + acetyl-CoA = a 3-oxoacyl-CoA + CoA. Its pathway is lipid metabolism; fatty acid beta-oxidation. In terms of biological role, catalyzes the final step of fatty acid oxidation in which acetyl-CoA is released and the CoA ester of a fatty acid two carbons shorter is formed. The sequence is that of 3-ketoacyl-CoA thiolase from Salmonella typhi.